We begin with the raw amino-acid sequence, 680 residues long: Pescadillo homolog (680 aa).

The segment at 315–336 (GEDEKPKAITNGEGESETPTDA) is disordered. The region spanning 359–471 (DPSQLFANCT…ELKEPNQYAP (113 aa)) is the BRCT domain. The segment at 494 to 680 (VPLEEQQTEA…ERKMAKGKAT (187 aa)) is disordered. Composition is skewed to acidic residues over residues 511–530 (DVED…DDEA), 543–556 (GSDD…EEAD), and 565–576 (AEVDDASEDDEQ). Basic and acidic residues-rich tracts occupy residues 597–610 (KASE…DPKS), 617–635 (RKEL…ERAK), and 654–664 (NKKDAESEKLR). A coiled-coil region spans residues 609–680 (KSKAKQQKRK…ERKMAKGKAT (72 aa)). Residues 665-680 (EKRRRIERKMAKGKAT) show a composition bias toward basic residues.

It belongs to the pescadillo family. In terms of assembly, component of the NOP7 complex, composed of ERB1, NOP7 and YTM1. The complex is held together by ERB1, which interacts with NOP7 via its N-terminal domain and with YTM1 via a high-affinity interaction between the seven-bladed beta-propeller domains of the 2 proteins. The NOP7 complex associates with the 66S pre-ribosome.

The protein localises to the nucleus. It is found in the nucleolus. Its subcellular location is the nucleoplasm. Its function is as follows. Component of the NOP7 complex, which is required for maturation of the 25S and 5.8S ribosomal RNAs and formation of the 60S ribosome. This is Pescadillo homolog from Pyricularia oryzae (strain 70-15 / ATCC MYA-4617 / FGSC 8958) (Rice blast fungus).